Consider the following 365-residue polypeptide: P43 5S RNA-binding protein (365 aa).

9 consecutive C2H2-type zinc fingers follow at residues 15–39 (LRCP…MAGH), 45–69 (WKCG…VKRH), 75–100 (LSCP…LYKH), 106–130 (LKCF…LSVH), 136–160 (SVCD…QKRH), 163–187 (YRCS…VKKH), 191–213 (LQCA…KATH), 220–245 (LPCP…RKLH), and 251–275 (HRCP…LVVH).

In terms of assembly, the 42S RNP particle comprises four subunits each of which contains one molecule of 5S RNA, three molecules of tRNA, two molecules of p50 (EF1-alpha) and one molecule of the 5S RNA binding protein 43.

P43 is a 5S RNA binding protein which is a major constituent of oocytes and comprises part of a 42S ribonucleoprotein storage particle. The sequence is that of P43 5S RNA-binding protein from Xenopus laevis (African clawed frog).